The following is a 144-amino-acid chain: D-aminoacyl-tRNA deacylase (144 aa).

Positions 136 to 137 (GP) match the Gly-cisPro motif, important for rejection of L-amino acids motif.

This sequence belongs to the DTD family. In terms of assembly, homodimer.

It is found in the cytoplasm. It carries out the reaction glycyl-tRNA(Ala) + H2O = tRNA(Ala) + glycine + H(+). The enzyme catalyses a D-aminoacyl-tRNA + H2O = a tRNA + a D-alpha-amino acid + H(+). Functionally, an aminoacyl-tRNA editing enzyme that deacylates mischarged D-aminoacyl-tRNAs. Also deacylates mischarged glycyl-tRNA(Ala), protecting cells against glycine mischarging by AlaRS. Acts via tRNA-based rather than protein-based catalysis; rejects L-amino acids rather than detecting D-amino acids in the active site. By recycling D-aminoacyl-tRNA to D-amino acids and free tRNA molecules, this enzyme counteracts the toxicity associated with the formation of D-aminoacyl-tRNA entities in vivo and helps enforce protein L-homochirality. The chain is D-aminoacyl-tRNA deacylase from Histophilus somni (strain 129Pt) (Haemophilus somnus).